The primary structure comprises 544 residues: Chaperonin GroEL (544 aa).

ATP is bound by residues 30–33, 87–91, glycine 414, 478–480, and aspartate 494; these read TLGP, DGTTT, and NAL.

This sequence belongs to the chaperonin (HSP60) family. As to quaternary structure, forms a cylinder of 14 subunits composed of two heptameric rings stacked back-to-back. Interacts with the co-chaperonin GroES.

Its subcellular location is the cytoplasm. The enzyme catalyses ATP + H2O + a folded polypeptide = ADP + phosphate + an unfolded polypeptide.. In terms of biological role, together with its co-chaperonin GroES, plays an essential role in assisting protein folding. The GroEL-GroES system forms a nano-cage that allows encapsulation of the non-native substrate proteins and provides a physical environment optimized to promote and accelerate protein folding. The polypeptide is Chaperonin GroEL (Pelotomaculum thermopropionicum (strain DSM 13744 / JCM 10971 / SI)).